The following is a 782-amino-acid chain: LPS-assembly protein LptD (782 aa).

Positions 1 to 24 (MKKNSYTRLSIAILSTLYSVSSLA) are cleaved as a signal peptide.

It belongs to the LptD family. As to quaternary structure, component of the lipopolysaccharide transport and assembly complex. Interacts with LptE and LptA.

Its subcellular location is the cell outer membrane. Its function is as follows. Together with LptE, is involved in the assembly of lipopolysaccharide (LPS) at the surface of the outer membrane. The protein is LPS-assembly protein LptD of Pasteurella multocida (strain Pm70).